The chain runs to 430 residues: Glutamine synthetase leaf isozyme, chloroplastic (430 aa).

Residues M1–V49 constitute a chloroplast transit peptide. The 81-residue stretch at I77–G157 folds into the GS beta-grasp domain. Residues S99–G119 form a disordered region. The GS catalytic domain maps to P161–V430.

It belongs to the glutamine synthetase family. Homooctamer.

The protein localises to the plastid. It localises to the chloroplast. It carries out the reaction L-glutamate + NH4(+) + ATP = L-glutamine + ADP + phosphate + H(+). The light-modulated chloroplast enzyme, encoded by a nuclear gene and expressed primarily in leaves, is responsible for the reassimilation of the ammonia generated by photorespiration. The protein is Glutamine synthetase leaf isozyme, chloroplastic (GS2) of Pisum sativum (Garden pea).